We begin with the raw amino-acid sequence, 246 residues long: DNA repair protein RecO (246 aa).

It belongs to the RecO family.

Involved in DNA repair and RecF pathway recombination. In Methylorubrum extorquens (strain PA1) (Methylobacterium extorquens), this protein is DNA repair protein RecO.